Consider the following 236-residue polypeptide: 2-C-methyl-D-erythritol 4-phosphate cytidylyltransferase (236 aa).

It belongs to the IspD/TarI cytidylyltransferase family. IspD subfamily. As to quaternary structure, homodimer.

It catalyses the reaction 2-C-methyl-D-erythritol 4-phosphate + CTP + H(+) = 4-CDP-2-C-methyl-D-erythritol + diphosphate. The protein operates within isoprenoid biosynthesis; isopentenyl diphosphate biosynthesis via DXP pathway; isopentenyl diphosphate from 1-deoxy-D-xylulose 5-phosphate: step 2/6. Functionally, catalyzes the formation of 4-diphosphocytidyl-2-C-methyl-D-erythritol from CTP and 2-C-methyl-D-erythritol 4-phosphate (MEP). In Buchnera aphidicola subsp. Schizaphis graminum (strain Sg), this protein is 2-C-methyl-D-erythritol 4-phosphate cytidylyltransferase.